Consider the following 143-residue polypeptide: Anti-sigma F factor (143 aa).

This sequence belongs to the anti-sigma-factor family.

The catalysed reaction is L-seryl-[protein] + ATP = O-phospho-L-seryl-[protein] + ADP + H(+). The enzyme catalyses L-threonyl-[protein] + ATP = O-phospho-L-threonyl-[protein] + ADP + H(+). Functionally, binds to sigma F and blocks its ability to form an RNA polymerase holoenzyme (E-sigma F). Phosphorylates SpoIIAA on a serine residue. This phosphorylation may enable SpoIIAA to act as an anti-anti-sigma factor that counteracts SpoIIAB and thus releases sigma F from inhibition. The polypeptide is Anti-sigma F factor (Clostridium acetobutylicum (strain ATCC 824 / DSM 792 / JCM 1419 / IAM 19013 / LMG 5710 / NBRC 13948 / NRRL B-527 / VKM B-1787 / 2291 / W)).